The following is a 401-amino-acid chain: Adenylosuccinate synthetase (401 aa).

GTP-binding positions include 11–17 and 39–41; these read GDEGKGK and GHT. The Proton acceptor role is filled by Asp12. Mg(2+) contacts are provided by Asp12 and Gly39. IMP-binding positions include 12–15, 37–40, Thr127, Arg141, Gln212, Thr227, and Arg290; these read DEGK and NAGH. The Proton donor role is filled by His40. 286–292 lines the substrate pocket; it reads ATTGRPR. GTP contacts are provided by residues Arg292, 318–320, and 390–392; these read KGD and SVG.

The protein belongs to the adenylosuccinate synthetase family. As to quaternary structure, homodimer. Mg(2+) is required as a cofactor.

The protein resides in the cytoplasm. The catalysed reaction is IMP + L-aspartate + GTP = N(6)-(1,2-dicarboxyethyl)-AMP + GDP + phosphate + 2 H(+). The protein operates within purine metabolism; AMP biosynthesis via de novo pathway; AMP from IMP: step 1/2. Plays an important role in the de novo pathway of purine nucleotide biosynthesis. Catalyzes the first committed step in the biosynthesis of AMP from IMP. This Thermosipho africanus (strain TCF52B) protein is Adenylosuccinate synthetase.